Consider the following 300-residue polypeptide: Acetaldehyde dehydrogenase 3 (300 aa).

Position 11–14 (11–14) interacts with NAD(+); sequence SGNI. Cysteine 126 acts as the Acyl-thioester intermediate in catalysis. NAD(+) contacts are provided by residues 157–165 and asparagine 276; that span reads SAGPGTRAN.

This sequence belongs to the acetaldehyde dehydrogenase family.

The enzyme catalyses acetaldehyde + NAD(+) + CoA = acetyl-CoA + NADH + H(+). The chain is Acetaldehyde dehydrogenase 3 from Rhodococcus opacus (strain B4).